Reading from the N-terminus, the 365-residue chain is DNA replication and repair protein RecF (365 aa).

30-37 (GRNAQGKT) provides a ligand contact to ATP.

Belongs to the RecF family.

It is found in the cytoplasm. Its function is as follows. The RecF protein is involved in DNA metabolism; it is required for DNA replication and normal SOS inducibility. RecF binds preferentially to single-stranded, linear DNA. It also seems to bind ATP. This is DNA replication and repair protein RecF from Streptococcus pneumoniae serotype 4 (strain ATCC BAA-334 / TIGR4).